The chain runs to 315 residues: Heme oxygenase 2 (315 aa).

A compositionally biased stretch (polar residues) spans 1–15 (MSSEVETSEGVDESE). Positions 1–29 (MSSEVETSEGVDESENNSTAPEKENHTKM) are disordered. The residue at position 2 (S2) is an N-acetylserine. At S2 the chain carries Phosphoserine. Over 2-294 (SSEVETSEGV…TAMAVLRKPS (293 aa)) the chain is Cytoplasmic. H44, Y153, K198, and R202 together coordinate heme b. HRM repeat units lie at residues 263-268 (KCPFYA) and 280-285 (NCPFRT). S-nitrosocysteine is present on residues C264 and C281. Residues 295 to 315 (LQLILAASVALVAGLLAWYYM) traverse the membrane as a helical; Anchor for type IV membrane protein segment.

It belongs to the heme oxygenase family. In terms of processing, a soluble form arises by proteolytic removal of the membrane anchor. Post-translationally, S-nitrosylated by BLVRB. In terms of tissue distribution, widely distributed in body with a high concentration in the brain.

It is found in the microsome membrane. It localises to the endoplasmic reticulum membrane. It catalyses the reaction heme b + 3 reduced [NADPH--hemoprotein reductase] + 3 O2 = biliverdin IXalpha + CO + Fe(2+) + 3 oxidized [NADPH--hemoprotein reductase] + 3 H2O + H(+). Its activity is regulated as follows. Inhibited by metalloporphyrins such as Sn- and Zn-protoporphyrins. Functionally, catalyzes the oxidative cleavage of heme at the alpha-methene bridge carbon, released as carbon monoxide (CO), to generate biliverdin IXalpha, while releasing the central heme iron chelate as ferrous iron. The polypeptide is Heme oxygenase 2 (Hmox2) (Rattus norvegicus (Rat)).